The sequence spans 168 residues: G/U mismatch-specific DNA glycosylase (168 aa).

This sequence belongs to the uracil-DNA glycosylase (UDG) superfamily. TDG/mug family. In terms of assembly, binds DNA as a monomer.

The protein localises to the cytoplasm. It carries out the reaction Specifically hydrolyzes mismatched double-stranded DNA and polynucleotides, releasing free uracil.. In terms of biological role, excises ethenocytosine and uracil, which can arise by alkylation or deamination of cytosine, respectively, from the corresponding mispairs with guanine in ds-DNA. It is capable of hydrolyzing the carbon-nitrogen bond between the sugar-phosphate backbone of the DNA and the mispaired base. The complementary strand guanine functions in substrate recognition. Required for DNA damage lesion repair in stationary-phase cells. This chain is G/U mismatch-specific DNA glycosylase, found in Klebsiella pneumoniae subsp. pneumoniae (strain ATCC 700721 / MGH 78578).